A 374-amino-acid chain; its full sequence is Histone acetyltransferase type B catalytic subunit (374 aa).

2 interaction with histone H4 N-terminus regions span residues 42-44 (DSE) and 194-196 (YKY). One can recognise an N-acetyltransferase domain in the interval 135–303 (VVYKSSLVDD…ESSRKSLKLE (169 aa)). Positions 197–205 (WHYLGAKSF) are interaction with HAT2. Residues 220 to 222 (FLI) and 227 to 233 (QNKGHGS) each bind acetyl-CoA. E255 serves as the catalytic Proton donor/acceptor. 2 residues coordinate acetyl-CoA: N258 and R267. Phosphoserine is present on S354.

This sequence belongs to the HAT1 family. In terms of assembly, component of the HAT-B complex composed of at least HAT1 and HAT2. In the cytoplasm, this complex binds to the histone H4 tail. In the nucleus, the HAT-B complex has an additional component, the histone H3/H4 chaperone HIF1.

It localises to the cytoplasm. It is found in the nucleus. The catalysed reaction is L-lysyl-[protein] + acetyl-CoA = N(6)-acetyl-L-lysyl-[protein] + CoA + H(+). Its function is as follows. Catalytic component of the histone acetylase B (HAT-B) complex. Acetylates 'Lys-12' of free histone H4 in the cytoplasm. The complex is also found in the nucleus, however it is not certain that it modifies histone H4 when packaged in chromatin. Histone H4 'Lys-12' acetylation is required for telomeric silencing. Has intrinsic substrate specificity that modifies lysine in recognition sequence GXGKXG. Involved in DNA double-strand break repair. The polypeptide is Histone acetyltransferase type B catalytic subunit (HAT1) (Saccharomyces cerevisiae (strain ATCC 204508 / S288c) (Baker's yeast)).